Consider the following 266-residue polypeptide: Large ribosomal subunit protein uL2m (266 aa).

Belongs to the universal ribosomal protein uL2 family.

It localises to the mitochondrion. This is Large ribosomal subunit protein uL2m (mrpl2) from Dictyostelium citrinum (Slime mold).